We begin with the raw amino-acid sequence, 184 residues long: NADH-quinone oxidoreductase subunit B (184 aa).

Residues Cys63, Cys64, Cys128, and Cys158 each contribute to the [4Fe-4S] cluster site.

Belongs to the complex I 20 kDa subunit family. As to quaternary structure, NDH-1 is composed of 14 different subunits. Subunits NuoB, C, D, E, F, and G constitute the peripheral sector of the complex. [4Fe-4S] cluster serves as cofactor.

The protein localises to the cell inner membrane. The enzyme catalyses a quinone + NADH + 5 H(+)(in) = a quinol + NAD(+) + 4 H(+)(out). In terms of biological role, NDH-1 shuttles electrons from NADH, via FMN and iron-sulfur (Fe-S) centers, to quinones in the respiratory chain. Couples the redox reaction to proton translocation (for every two electrons transferred, four hydrogen ions are translocated across the cytoplasmic membrane), and thus conserves the redox energy in a proton gradient. In Xanthomonas campestris pv. campestris (strain 8004), this protein is NADH-quinone oxidoreductase subunit B.